A 728-amino-acid polypeptide reads, in one-letter code: 1,4-alpha-glucan branching enzyme GlgB (728 aa).

D405 functions as the Nucleophile in the catalytic mechanism. E458 acts as the Proton donor in catalysis.

Belongs to the glycosyl hydrolase 13 family. GlgB subfamily. In terms of assembly, monomer.

It carries out the reaction Transfers a segment of a (1-&gt;4)-alpha-D-glucan chain to a primary hydroxy group in a similar glucan chain.. Its pathway is glycan biosynthesis; glycogen biosynthesis. Catalyzes the formation of the alpha-1,6-glucosidic linkages in glycogen by scission of a 1,4-alpha-linked oligosaccharide from growing alpha-1,4-glucan chains and the subsequent attachment of the oligosaccharide to the alpha-1,6 position. The chain is 1,4-alpha-glucan branching enzyme GlgB from Escherichia coli O6:H1 (strain CFT073 / ATCC 700928 / UPEC).